The primary structure comprises 114 residues: Large ribosomal subunit protein bL20 (114 aa).

This sequence belongs to the bacterial ribosomal protein bL20 family.

In terms of biological role, binds directly to 23S ribosomal RNA and is necessary for the in vitro assembly process of the 50S ribosomal subunit. It is not involved in the protein synthesizing functions of that subunit. This is Large ribosomal subunit protein bL20 from Anaeromyxobacter dehalogenans (strain 2CP-1 / ATCC BAA-258).